Here is a 375-residue protein sequence, read N- to C-terminus: Queuine tRNA-ribosyltransferase (375 aa).

D89 (proton acceptor) is an active-site residue. Residues D89–F93, D143, Q187, and G214 each bind substrate. The tract at residues G245–D251 is RNA binding. The Nucleophile role is filled by D264. The interval T269 to R273 is RNA binding; important for wobble base 34 recognition. The Zn(2+) site is built by C302, C304, C307, and H333.

Belongs to the queuine tRNA-ribosyltransferase family. Homodimer. Within each dimer, one monomer is responsible for RNA recognition and catalysis, while the other monomer binds to the replacement base PreQ1. It depends on Zn(2+) as a cofactor.

The catalysed reaction is 7-aminomethyl-7-carbaguanine + guanosine(34) in tRNA = 7-aminomethyl-7-carbaguanosine(34) in tRNA + guanine. Its pathway is tRNA modification; tRNA-queuosine biosynthesis. Its function is as follows. Catalyzes the base-exchange of a guanine (G) residue with the queuine precursor 7-aminomethyl-7-deazaguanine (PreQ1) at position 34 (anticodon wobble position) in tRNAs with GU(N) anticodons (tRNA-Asp, -Asn, -His and -Tyr). Catalysis occurs through a double-displacement mechanism. The nucleophile active site attacks the C1' of nucleotide 34 to detach the guanine base from the RNA, forming a covalent enzyme-RNA intermediate. The proton acceptor active site deprotonates the incoming PreQ1, allowing a nucleophilic attack on the C1' of the ribose to form the product. After dissociation, two additional enzymatic reactions on the tRNA convert PreQ1 to queuine (Q), resulting in the hypermodified nucleoside queuosine (7-(((4,5-cis-dihydroxy-2-cyclopenten-1-yl)amino)methyl)-7-deazaguanosine). In Citrobacter koseri (strain ATCC BAA-895 / CDC 4225-83 / SGSC4696), this protein is Queuine tRNA-ribosyltransferase.